The primary structure comprises 490 residues: Aspartyl/glutamyl-tRNA(Asn/Gln) amidotransferase subunit B (490 aa).

Belongs to the GatB/GatE family. GatB subfamily. As to quaternary structure, heterotrimer of A, B and C subunits.

The catalysed reaction is L-glutamyl-tRNA(Gln) + L-glutamine + ATP + H2O = L-glutaminyl-tRNA(Gln) + L-glutamate + ADP + phosphate + H(+). The enzyme catalyses L-aspartyl-tRNA(Asn) + L-glutamine + ATP + H2O = L-asparaginyl-tRNA(Asn) + L-glutamate + ADP + phosphate + 2 H(+). Allows the formation of correctly charged Asn-tRNA(Asn) or Gln-tRNA(Gln) through the transamidation of misacylated Asp-tRNA(Asn) or Glu-tRNA(Gln) in organisms which lack either or both of asparaginyl-tRNA or glutaminyl-tRNA synthetases. The reaction takes place in the presence of glutamine and ATP through an activated phospho-Asp-tRNA(Asn) or phospho-Glu-tRNA(Gln). In Burkholderia pseudomallei (strain 1106a), this protein is Aspartyl/glutamyl-tRNA(Asn/Gln) amidotransferase subunit B.